Here is a 178-residue protein sequence, read N- to C-terminus: Sec-independent protein translocase protein TatB (178 aa).

A helical transmembrane segment spans residues Met-1–Gly-21. A compositionally biased stretch (polar residues) spans Thr-77 to Thr-86. Residues Thr-77–Ser-178 form a disordered region. The span at Pro-93–Ala-102 shows a compositional bias: basic and acidic residues. Positions His-155–His-165 are enriched in low complexity. Residues Glu-166–Ser-178 are compositionally biased toward basic and acidic residues.

This sequence belongs to the TatB family. As to quaternary structure, the Tat system comprises two distinct complexes: a TatABC complex, containing multiple copies of TatA, TatB and TatC subunits, and a separate TatA complex, containing only TatA subunits. Substrates initially bind to the TatABC complex, which probably triggers association of the separate TatA complex to form the active translocon.

Its subcellular location is the cell inner membrane. In terms of biological role, part of the twin-arginine translocation (Tat) system that transports large folded proteins containing a characteristic twin-arginine motif in their signal peptide across membranes. Together with TatC, TatB is part of a receptor directly interacting with Tat signal peptides. TatB may form an oligomeric binding site that transiently accommodates folded Tat precursor proteins before their translocation. This Nitrobacter hamburgensis (strain DSM 10229 / NCIMB 13809 / X14) protein is Sec-independent protein translocase protein TatB.